Consider the following 464-residue polypeptide: ATP synthase subunit beta (464 aa).

An ATP-binding site is contributed by 153-160 (GGAGVGKT).

Belongs to the ATPase alpha/beta chains family. F-type ATPases have 2 components, CF(1) - the catalytic core - and CF(0) - the membrane proton channel. CF(1) has five subunits: alpha(3), beta(3), gamma(1), delta(1), epsilon(1). CF(0) has three main subunits: a(1), b(2) and c(9-12). The alpha and beta chains form an alternating ring which encloses part of the gamma chain. CF(1) is attached to CF(0) by a central stalk formed by the gamma and epsilon chains, while a peripheral stalk is formed by the delta and b chains.

It is found in the cell membrane. The enzyme catalyses ATP + H2O + 4 H(+)(in) = ADP + phosphate + 5 H(+)(out). In terms of biological role, produces ATP from ADP in the presence of a proton gradient across the membrane. The catalytic sites are hosted primarily by the beta subunits. This is ATP synthase subunit beta from Alkaliphilus oremlandii (strain OhILAs) (Clostridium oremlandii (strain OhILAs)).